The sequence spans 240 residues: Ribosomal RNA large subunit methyltransferase E (240 aa).

Positions 1 to 20 are enriched in gly residues; it reads MSKAGGNKGGSRTGGRGGAG. A disordered region spans residues 1 to 33; it reads MSKAGGNKGGSRTGGRGGAGSSNLHVRVKKKAG. The S-adenosyl-L-methionine site is built by Gly-92, Trp-94, Asp-115, Asp-131, and Asp-155. Lys-195 functions as the Proton acceptor in the catalytic mechanism.

Belongs to the class I-like SAM-binding methyltransferase superfamily. RNA methyltransferase RlmE family.

It localises to the cytoplasm. The catalysed reaction is uridine(2552) in 23S rRNA + S-adenosyl-L-methionine = 2'-O-methyluridine(2552) in 23S rRNA + S-adenosyl-L-homocysteine + H(+). Its function is as follows. Specifically methylates the uridine in position 2552 of 23S rRNA at the 2'-O position of the ribose in the fully assembled 50S ribosomal subunit. The protein is Ribosomal RNA large subunit methyltransferase E of Brucella abortus (strain S19).